Consider the following 564-residue polypeptide: E3 ubiquitin-protein ligase TRIM16 (564 aa).

The tract at residues 1-70 is disordered; it reads MAELDLMAPG…DPAEQGDPAG (70 aa). Low complexity predominate over residues 24 to 39; the sequence is SPDSGSPSPDSGSASP. B box-type zinc fingers lie at residues 72 to 122 and 126 to 165; these read GKEV…LTEP and HNWR…IVSL. S116 bears the Phosphoserine mark. C131, H134, C153, and H157 together coordinate Zn(2+). Coiled coils occupy residues 165 to 203, 243 to 274, and 320 to 340; these read LDAA…NQKS, AALS…RMAA, and HLIQ…KEEE. A Phosphoserine modification is found at S203. Positions 355–553 constitute a B30.2/SPRY domain; the sequence is YWTSKPEPST…RIVDLGEEPE (199 aa).

It belongs to the TRIM/RBCC family. Homodimerizes via its coiled-coil domain. Heterodimerizes with MID1, TRIM24 and PML. Interacts with Galectin-3/LGALS3 in a ULK1-dependent manner; this interaction mediates autophagy of damage endomembranes. Interacts with BECN1. Interacts with ATG16L1. Interacts with p62/SQSTM and LC3B/MAP1LC3B. Post-translationally, phosphorylated by ULK1. Auto-ubiquitinates via its B-Boxes.

The protein resides in the cytoplasm. It carries out the reaction S-ubiquitinyl-[E2 ubiquitin-conjugating enzyme]-L-cysteine + [acceptor protein]-L-lysine = [E2 ubiquitin-conjugating enzyme]-L-cysteine + N(6)-ubiquitinyl-[acceptor protein]-L-lysine.. Functionally, E3 ubiquitin ligase that plays an essential role in the organization of autophagic response and ubiquitination upon lysosomal and phagosomal damages. Plays a role in the stress-induced biogenesis and degradation of protein aggresomes by regulating the p62-KEAP1-NRF2 signaling and particularly by modulating the ubiquitination levels and thus stability of NRF2. Acts as a scaffold protein and facilitates autophagic degradation of protein aggregates by interacting with p62/SQSTM, ATG16L1 and LC3B/MAP1LC3B. In turn, protects the cell against oxidative stress-induced cell death as a consequence of endomembrane damage. This chain is E3 ubiquitin-protein ligase TRIM16 (TRIM16), found in Pongo abelii (Sumatran orangutan).